The sequence spans 179 residues: Large ribosomal subunit protein uL5 (179 aa).

Belongs to the universal ribosomal protein uL5 family. As to quaternary structure, part of the 50S ribosomal subunit; part of the 5S rRNA/L5/L18/L25 subcomplex. Contacts the 5S rRNA and the P site tRNA. Forms a bridge to the 30S subunit in the 70S ribosome.

Its function is as follows. This is one of the proteins that bind and probably mediate the attachment of the 5S RNA into the large ribosomal subunit, where it forms part of the central protuberance. In the 70S ribosome it contacts protein S13 of the 30S subunit (bridge B1b), connecting the 2 subunits; this bridge is implicated in subunit movement. Contacts the P site tRNA; the 5S rRNA and some of its associated proteins might help stabilize positioning of ribosome-bound tRNAs. The protein is Large ribosomal subunit protein uL5 of Glaesserella parasuis serovar 5 (strain SH0165) (Haemophilus parasuis).